Here is a 231-residue protein sequence, read N- to C-terminus: Two-component response regulator ORR1 (231 aa).

The Response regulatory domain occupies 9–135 (RVLLVDDSPV…DVQRLRKCSP (127 aa)). At Asp68 the chain carries 4-aspartylphosphate.

It belongs to the ARR family. Type-A subfamily. In terms of processing, two-component system major event consists of a His-to-Asp phosphorelay between a sensor histidine kinase (HK) and a response regulator (RR). In plants, the His-to-Asp phosphorelay involves an additional intermediate named Histidine-containing phosphotransfer protein (HPt). This multistep phosphorelay consists of a His-Asp-His-Asp sequential transfer of a phosphate group between first a His and an Asp of the HK protein, followed by the transfer to a conserved His of the HPt protein and finally the transfer to an Asp in the receiver domain of the RR protein. As to expression, expressed in mature leaves and flowers, and at low levels in roots and shoots.

Its function is as follows. Functions as a response regulator involved in His-to-Asp phosphorelay signal transduction system. Phosphorylation of the Asp residue in the receiver domain activates the ability of the protein to promote the transcription of target genes. Type-A response regulators seem to act as negative regulators of the cytokinin signaling. The sequence is that of Two-component response regulator ORR1 from Oryza sativa subsp. indica (Rice).